Reading from the N-terminus, the 806-residue chain is Acetyl-CoA decarbonylase/synthase complex subunit alpha 1 (806 aa).

C73, C76, C77, C79, C84, and C94 together coordinate [4Fe-4S] cluster. H117 serves as a coordination point for CO. [Ni-4Fe-4S] cluster contacts are provided by H250, C278, and C323. 2 4Fe-4S ferredoxin-type domains span residues 407-436 (DEEF…IPEA) and 446-475 (SYLD…LNII). Positions 417, 420, 423, 427, 455, 458, 461, and 465 each coordinate [4Fe-4S] cluster. Residues C523, C552, and C587 each coordinate [Ni-4Fe-4S] cluster.

It belongs to the Ni-containing carbon monoxide dehydrogenase family. In terms of assembly, heterotetramer of two alpha and two epsilon subunits. The ACDS complex is made up of alpha, epsilon, beta, gamma and delta subunits with a probable stoichiometry of (alpha(2)epsilon(2))(4)-beta(8)-(gamma(1)delta(1))(8). The cofactor is [4Fe-4S] cluster. Requires [Ni-4Fe-4S] cluster as cofactor.

It carries out the reaction CO + 2 oxidized [2Fe-2S]-[ferredoxin] + H2O = 2 reduced [2Fe-2S]-[ferredoxin] + CO2 + 2 H(+). The protein operates within one-carbon metabolism; methanogenesis from acetate. Its activity is regulated as follows. Carbon monoxide dehydrogenase activity is inhibited by KCN and is rapidly inactivated by O(2). In terms of biological role, part of the ACDS complex that catalyzes the reversible cleavage of acetyl-CoA, allowing growth on acetate as sole source of carbon and energy. The alpha-epsilon subcomponent functions as a carbon monoxide dehydrogenase. This is Acetyl-CoA decarbonylase/synthase complex subunit alpha 1 from Methanosarcina barkeri (strain Fusaro / DSM 804).